Reading from the N-terminus, the 393-residue chain is MENNNNNNKNDNEINFKKIEINETLESGKFIESKIDMKLGELIIKVQSPMCFSFHKHLVNQFCFNCFSNSHEINNAKFNKFKVDINKNYIIRCNNCKLIYFCSDECFEKVMSIESFQDSTSTNIHTPLECLILSNYHDQTISPKINTLHDQTENRMIINYLSKIAYSTNNNNKFKLLLIEMNQLIGDFNNDNNNQTLSLNEIKNIKNKSFNLRKLFNNFFFNIDKVIIEELYAKSQRNSFGLWKNSDECFGLSMYGNQTIYNNNNDKDDNISISYFNHSCFPNCVRVQENQSISIYSLIPIKKGDELSISYIDIRMSKNDRLLHLKEIYYFECKCKRCTLPPLSNLSLEIEKTIENYTCKNQSIKCTGILYLPPFNKIQRICNFCHWKEPINN.

One can recognise an SET domain in the interval 17-312; that stretch reads KKIEINETLE…KGDELSISYI (296 aa).

It belongs to the class V-like SAM-binding methyltransferase superfamily.

Functionally, probable methyltransferase. In Dictyostelium discoideum (Social amoeba), this protein is SET domain-containing protein DDB_G0283443.